Consider the following 360-residue polypeptide: DNA replication and repair protein RecF (360 aa).

33–40 (GENGSGKT) is a binding site for ATP.

Belongs to the RecF family.

The protein localises to the cytoplasm. Its function is as follows. The RecF protein is involved in DNA metabolism; it is required for DNA replication and normal SOS inducibility. RecF binds preferentially to single-stranded, linear DNA. It also seems to bind ATP. The sequence is that of DNA replication and repair protein RecF from Rickettsia canadensis (strain McKiel).